Here is a 309-residue protein sequence, read N- to C-terminus: GTP cyclohydrolase MptA (309 aa).

Belongs to the GTP cyclohydrolase IV family. As to quaternary structure, homodimer. The cofactor is Fe(2+).

It carries out the reaction GTP + H2O = 7,8-dihydroneopterin 2',3'-cyclic phosphate + formate + diphosphate + H(+). Its pathway is cofactor biosynthesis; 5,6,7,8-tetrahydromethanopterin biosynthesis. In terms of biological role, converts GTP to 7,8-dihydro-D-neopterin 2',3'-cyclic phosphate, the first intermediate in the biosynthesis of coenzyme methanopterin. In Methanococcus aeolicus (strain ATCC BAA-1280 / DSM 17508 / OCM 812 / Nankai-3), this protein is GTP cyclohydrolase MptA.